Consider the following 334-residue polypeptide: Ornithine carbamoyltransferase (334 aa).

Carbamoyl phosphate is bound by residues 56 to 59 (STRT), Q83, R107, and 134 to 137 (HPTQ). L-ornithine-binding positions include N168, D232, and 236 to 237 (SM). Carbamoyl phosphate contacts are provided by residues 274-275 (CL) and R320.

Belongs to the aspartate/ornithine carbamoyltransferase superfamily. OTCase family.

The protein resides in the cytoplasm. It catalyses the reaction carbamoyl phosphate + L-ornithine = L-citrulline + phosphate + H(+). It functions in the pathway amino-acid biosynthesis; L-arginine biosynthesis; L-arginine from L-ornithine and carbamoyl phosphate: step 1/3. In terms of biological role, reversibly catalyzes the transfer of the carbamoyl group from carbamoyl phosphate (CP) to the N(epsilon) atom of ornithine (ORN) to produce L-citrulline. The polypeptide is Ornithine carbamoyltransferase (Shigella sonnei (strain Ss046)).